A 344-amino-acid polypeptide reads, in one-letter code: Transcription factor AIG1 (344 aa).

Positions 131–180 constitute a bHLH domain; that stretch reads AASKSHSEAERRRRERINTHLAKLRSILPNTTKTDKASLLAEVIQHMKEL. Residues 313–344 are disordered; that stretch reads NDESNDNNNLEKSSSGGIKRQRTSKMVNRCYN. Residues 318–327 show a composition bias toward low complexity; the sequence is DNNNLEKSSS.

As to quaternary structure, homodimer. Interacts with LHW.

It localises to the nucleus. Its function is as follows. Transcription factor required for MONOPTEROS-dependent root initiation in embryo. Transcriptionally controlled by MONOPTEROS. This is Transcription factor AIG1 (BHLH32) from Arabidopsis thaliana (Mouse-ear cress).